The primary structure comprises 647 residues: Macrolide export ATP-binding/permease protein MacB (647 aa).

The 239-residue stretch at 5-243 (LELKGIERSY…TQTPSLTSKI (239 aa)) folds into the ABC transporter domain. Residue 41 to 48 (GASGSGKS) participates in ATP binding. 4 helical membrane-spanning segments follow: residues 272-292 (LLTM…LVIG), 522-542 (LFLT…VMNI), 576-596 (ILVC…IAFI), and 610-630 (PIAL…FGFL).

Belongs to the ABC transporter superfamily. Macrolide exporter (TC 3.A.1.122) family. Homodimer. Part of the tripartite efflux system MacAB-TolC, which is composed of an inner membrane transporter, MacB, a periplasmic membrane fusion protein, MacA, and an outer membrane component, TolC. The complex forms a large protein conduit and can translocate molecules across both the inner and outer membranes. Interacts with MacA.

The protein resides in the cell inner membrane. Part of the tripartite efflux system MacAB-TolC. MacB is a non-canonical ABC transporter that contains transmembrane domains (TMD), which form a pore in the inner membrane, and an ATP-binding domain (NBD), which is responsible for energy generation. Confers resistance against macrolides. The polypeptide is Macrolide export ATP-binding/permease protein MacB (Photorhabdus laumondii subsp. laumondii (strain DSM 15139 / CIP 105565 / TT01) (Photorhabdus luminescens subsp. laumondii)).